A 247-amino-acid chain; its full sequence is MIYQGFASVYDELMSHAPYDQWTKWIEASLPEKGRILDLACGTGEISIRLAEKGFEVTGIDLSEEMLSFAQQKVSSSQPILFLQQDMREITGFDGQFDAVVICCDSLNYLKTKNDVIETFKSVFRVLKPEGILLFDVHSSFKIAEVFPDSTFADQDEDISYIWQSFAGSDELSVIHDMSFFVWNGEAYDRFDETHEQRTFPVEEYEEMLKNCGFQLHRVTADFTDTEPSAQSERLFFKAQKSKTIVS.

It belongs to the methyltransferase superfamily.

In terms of biological role, may be a S-adenosyl-L-methionine (SAM)-dependent methyltransferase. This is Putative methyltransferase YqeM (yqeM) from Bacillus subtilis (strain 168).